The primary structure comprises 173 residues: MAKRRKSSKNKEKETNWQERVIQIRRVSKVVKGGKKLSFRAIVVIGNETGKVGVGVGKAGDVIGAVRKGVSDAKKHVVDVPLTKTNTITHRINGVAGGAKVMMRPAAPGTGVIAGGAVRTVLELAGVKNILAKQLGSSSPLNNARATVDALGNLRSFSSVAQERGVSIERIYA.

Residues 17–80 form the S5 DRBM domain; sequence WQERVIQIRR…SDAKKHVVDV (64 aa).

The protein belongs to the universal ribosomal protein uS5 family. As to quaternary structure, part of the 30S ribosomal subunit. Contacts proteins S4 and S8.

With S4 and S12 plays an important role in translational accuracy. In terms of biological role, located at the back of the 30S subunit body where it stabilizes the conformation of the head with respect to the body. This is Small ribosomal subunit protein uS5 from Picosynechococcus sp. (strain ATCC 27264 / PCC 7002 / PR-6) (Agmenellum quadruplicatum).